The sequence spans 284 residues: Diaminopimelate epimerase (284 aa).

Positions 13 and 70 each coordinate substrate. The active-site Proton donor is cysteine 79. Residues 80–81 (GN), asparagine 167, asparagine 200, and 218–219 (ER) contribute to the substrate site. Residue cysteine 227 is the Proton acceptor of the active site. 228-229 (GT) is a substrate binding site.

It belongs to the diaminopimelate epimerase family. As to quaternary structure, homodimer.

The protein localises to the cytoplasm. It catalyses the reaction (2S,6S)-2,6-diaminopimelate = meso-2,6-diaminopimelate. It functions in the pathway amino-acid biosynthesis; L-lysine biosynthesis via DAP pathway; DL-2,6-diaminopimelate from LL-2,6-diaminopimelate: step 1/1. Functionally, catalyzes the stereoinversion of LL-2,6-diaminopimelate (L,L-DAP) to meso-diaminopimelate (meso-DAP), a precursor of L-lysine and an essential component of the bacterial peptidoglycan. This is Diaminopimelate epimerase from Prochlorococcus marinus (strain NATL1A).